A 107-amino-acid chain; its full sequence is MADISFSLHAEQTLESLLERMSEFDALADLDMDIIDGVLTLEFDDGGKLILNRQEAASQIWLASPEGPAHFGYDADRDAWLNDRTGESLTDTLNRVLSAGCGETIRL.

It belongs to the frataxin family.

In terms of biological role, involved in iron-sulfur (Fe-S) cluster assembly. May act as a regulator of Fe-S biogenesis. In Thioalkalivibrio sulfidiphilus (strain HL-EbGR7), this protein is Iron-sulfur cluster assembly protein CyaY.